The chain runs to 335 residues: Phospholipid scramblase 1 (335 aa).

Residues 1–101 (MEKHGPPEHA…NHPGGPGGTP (101 aa)) form a proline-rich domain (PRD) region. The segment at 1 to 102 (MEKHGPPEHA…HPGGPGGTPW (102 aa)) is disordered. The Cytoplasmic portion of the chain corresponds to 1 to 305 (MEKHGPPEHA…IQFPLDLDVK (305 aa)). 6 repeat units span residues 23–29 (QGPYPGP), 30–36 (QGPYPGP), 37–43 (QGPYAGP), 44–50 (QGPYPGP), 51–57 (QGPYAGP), and 58–64 (QGPYPGP). The segment at 23-71 (QGPYPGPQGPYPGPQGPYAGPQGPYPGPQGPYAGPQGPYPGPQPGYPVP) is 7 X 7 AA tandem repeats of Q-G-P-Y-[AP]-G-P. Pro residues predominate over residues 26–37 (YPGPQGPYPGPQ). Over residues 59 to 72 (GPYPGPQPGYPVPP) the composition is skewed to pro residues. An SH3-binding 1 motif is present at residues 64-72 (PQPGYPVPP). A 7; approximate repeat occupies 65 to 71 (QPGYPVP). Tyr91 bears the Phosphotyrosine; by ABL mark. An SH3-binding 2 motif is present at residues 101 to 109 (PWMQAPPPP). A Phosphothreonine; by PKC/PRKCD modification is found at Thr178. Residues Cys201, Cys202, Cys205, and Cys206 are each lipidated (S-palmitoyl cysteine). The Nuclear localization signal motif lies at 274-283 (GKISKQWSGF). A helical membrane pass occupies residues 306 to 322 (MKAVMLGACFLIDFMFF). Topologically, residues 323 to 335 (ERTGNEEQRSGVW) are extracellular.

Belongs to the phospholipid scramblase family. Forms homooligomers in the presence of calcium. Interacts with ABL. Interacts with RELT, RELL1 and RELL2. Interacts with OXSR1 in the presence of RELT. Interacts with OCLN, TOP2A and TOP2B. Interacts with TRPC1, TRPC4 and TRPC5. Interacts with ILDR1. Ca(2+) serves as cofactor. The cofactor is Mg(2+). It depends on Zn(2+) as a cofactor. Post-translationally, phosphorylated on tyrosine residues. Phosphorylated by OXSR1 in the presence of RELT. Phosphorylation at Thr-178 by PKC/PKCD increases its phospholipid scramblase activity during both cell stimulation and apoptosis. In terms of processing, palmitoylation is required for its phospholipid scramblase activity. Palmitoylation regulates its localization to the cell membrane or the nucleus; trafficking to the cell membrane is dependent upon palmitoylation whereas in the absence of palmitoylation, localizes to the nucleus.

The protein localises to the cell membrane. Its subcellular location is the nucleus. It is found in the cytoplasm. The protein resides in the perinuclear region. The enzyme catalyses a 1,2-diacyl-sn-glycero-3-phosphocholine(in) = a 1,2-diacyl-sn-glycero-3-phosphocholine(out). It catalyses the reaction a 1,2-diacyl-sn-glycero-3-phosphoethanolamine(in) = a 1,2-diacyl-sn-glycero-3-phosphoethanolamine(out). It carries out the reaction a 1,2-diacyl-sn-glycero-3-phospho-L-serine(in) = a 1,2-diacyl-sn-glycero-3-phospho-L-serine(out). Its function is as follows. Catalyzes calcium-induced ATP-independent rapid bidirectional and non-specific distribution of phospholipids (lipid scrambling or lipid flip-flop) between the inner and outer leaflet of the plasma membrane resulting in collapse of the phospholipid asymmetry which leads to phosphatidylserine externalization on the cell surface. Mediates calcium-dependent phosphatidylserine externalization and apoptosis in neurons via its association with TRPC5. Also exhibits magnesium-dependent nuclease activity against double-stranded DNA and RNA but not single-stranded DNA and can enhance DNA decatenation mediated by TOP2A. Negatively regulates FcR-mediated phagocytosis in differentiated macrophages. May contribute to cytokine-regulated cell proliferation and differentiation. This is Phospholipid scramblase 1 (Plscr1) from Rattus norvegicus (Rat).